A 221-amino-acid chain; its full sequence is Cutinase 3 (221 aa).

The N-terminal stretch at methionine 1 to alanine 17 is a signal peptide. Intrachain disulfides connect cysteine 44-cysteine 122 and cysteine 70-cysteine 84. The active-site Nucleophile is the serine 133. Cysteine 184 and cysteine 191 are joined by a disulfide. Aspartate 188 is an active-site residue. Histidine 201 acts as the Proton donor/acceptor in catalysis.

The protein belongs to the cutinase family.

It localises to the secreted. The catalysed reaction is cutin + H2O = cutin monomers.. Catalyzes the hydrolysis of complex carboxylic polyesters found in the cell wall of plants. Degrades cutin, a macromolecule that forms the structure of the plant cuticle. Also degrades suberin, a specialized macromolecule found in the cell wall of various plant tissues. In Emericella nidulans (strain FGSC A4 / ATCC 38163 / CBS 112.46 / NRRL 194 / M139) (Aspergillus nidulans), this protein is Cutinase 3.